The sequence spans 621 residues: 1-deoxy-D-xylulose-5-phosphate synthase (621 aa).

Residues His-80 and 121-123 (GHS) contribute to the thiamine diphosphate site. Position 152 (Asp-152) interacts with Mg(2+). Thiamine diphosphate-binding positions include 153–154 (GA), Asn-181, Tyr-288, and Glu-371. Asn-181 lines the Mg(2+) pocket.

The protein belongs to the transketolase family. DXPS subfamily. In terms of assembly, homodimer. Mg(2+) is required as a cofactor. The cofactor is thiamine diphosphate.

It catalyses the reaction D-glyceraldehyde 3-phosphate + pyruvate + H(+) = 1-deoxy-D-xylulose 5-phosphate + CO2. It functions in the pathway metabolic intermediate biosynthesis; 1-deoxy-D-xylulose 5-phosphate biosynthesis; 1-deoxy-D-xylulose 5-phosphate from D-glyceraldehyde 3-phosphate and pyruvate: step 1/1. Functionally, catalyzes the acyloin condensation reaction between C atoms 2 and 3 of pyruvate and glyceraldehyde 3-phosphate to yield 1-deoxy-D-xylulose-5-phosphate (DXP). The polypeptide is 1-deoxy-D-xylulose-5-phosphate synthase (Pectobacterium atrosepticum (strain SCRI 1043 / ATCC BAA-672) (Erwinia carotovora subsp. atroseptica)).